The primary structure comprises 245 residues: Phosphoribosylaminoimidazole-succinocarboxamide synthase (245 aa).

The protein belongs to the SAICAR synthetase family.

The enzyme catalyses 5-amino-1-(5-phospho-D-ribosyl)imidazole-4-carboxylate + L-aspartate + ATP = (2S)-2-[5-amino-1-(5-phospho-beta-D-ribosyl)imidazole-4-carboxamido]succinate + ADP + phosphate + 2 H(+). It functions in the pathway purine metabolism; IMP biosynthesis via de novo pathway; 5-amino-1-(5-phospho-D-ribosyl)imidazole-4-carboxamide from 5-amino-1-(5-phospho-D-ribosyl)imidazole-4-carboxylate: step 1/2. This Trichormus variabilis (strain ATCC 29413 / PCC 7937) (Anabaena variabilis) protein is Phosphoribosylaminoimidazole-succinocarboxamide synthase.